The following is a 280-amino-acid chain: UPF0276 protein NGO_1946 (280 aa).

Belongs to the UPF0276 family.

In Neisseria gonorrhoeae (strain ATCC 700825 / FA 1090), this protein is UPF0276 protein NGO_1946.